Consider the following 1891-residue polypeptide: MAGLQLMTPASSPMGPFFGLPWQQEAIHDNIYTPRKYQVELLEAALDHNTIVCLNSGSGKTFIAVLLSKELSYQIRGDFSKNAKRTVFLVNSEKQVSQQVSAVRTHTDLKVGEYSDLQKTQCWAKEKWYQEFETRQVLVMTCHIFLNVLKSGNVSLSNINLLVFDECHLAIQDHPYREIMKICESCQPCPRILGLTASILNGKCDPRDLEEKIQKLEKILRSNAETATDLVVLDRYASQPCEIVLDCGPYVDRSGLFQRLLNELDEALNFLIDCNISTHSKERDSTIISKQILSDCRAVLLVLGPWCADKVAGMMVRELQKYIKHEQEELHRKFLLFTDTILRKIHALCEEHFSPASLDMKFVTPKVIKLLEILRKYKPYERQQFESVEWYNNRNQDNYVSWSDSEDDDDDEDEEIEEKEKTETSFPSPFTNILCGIIFVERRYTAVVLNRLIKEAGKQDPELAYISSNFITGHGIGKNQPRNKQMEVEFRKQEEVLRKFRAHETNLLIATSIVEEGVDIPKCNLVVRFDLPSEYRSYVQSKGRARAPISNYIMLADSDKIKTFEEDLKTYKAIEKILRNKCSKSIDCGNTESEPVVDDDEIFPPYVLRQDDGSPRVTINTAIGHINRYCARLPSDPFTHLAPKCKTREMSDGPYRSTLYLPINSPLRAPIVGPPMNCARLAERAVALICCKKLHEIGELDDHLMPVGKETVKYEEELDLHDEEETSVPGRPGSTKRRQCYPKAIPECLRNSYPKPGQPCYLYVIGMVLTTPLPDELNFRRRKLYPPEDTTRCFGILTAKPIPQIPHFPVYTRSGEVTISIELKKSGFTLNLEQLELITRLHQYIFSHILRLEKPALEFKPTVADCAYCVLPLNVVNDSGTLDIDFKFVEDIEKSEARTGIPNTQYSAESPFIFKLEDYQDAVIIPRYRNFDQPHRFYVADVYTDLTPLSKFPSPEYETFAEYYKTKYNLDLTNLNQPLLDVDHTSSRLNLLTPRHLNQKGKALPLSSAEKRKAKWESLQNKQILVPELCAIHPVPASLWRKAVCLPSILYRLHCLLTAEELRAQTAIDAGVGVKSLPEDFRYPNLDFGWKRSIDSKTFISSQSSSAVESEGDCRLNTTMVPDSATSSAANHVIYTQTNDQMSVNCTPLCQKSLSDLRGVCFSEDYKAINGVSCNGVTSDSEAESGVCFQKDERIACTQEIPEKSTSFHIQNLPKENQPILNECTLSKKFLDGNVSKPTSDECPSTCTSDMQYESGLSNGYSSKTLGPNPGLILQALTLSNASDGFNLERLEMLGDSFLKHAITTYLFCTYPDAHEGRLSYMRSKKVSNCNLYRLGKKKGSPSRMVVSIFDPPVNWLPPGYIVNQDKSSDKWESNETSGEGVMANGKIDEDFDDDDEEDEDLMWRNPKEETDFDDDFLEYDQEHIKFIDSMLMGSGAFVKKIPLSSFAPPDQNYEWRAPKKPLLESAQFPSEFDDFDYSSWDAMCYLDPSKAVEEDDFVVGFWNPSEENCGTDVGKQSISYDLHTEQCIADKSIADCVEALLGCYLTSCGERAAQLFLCSLGLKVLPQVRRSVTSTNSISASSSYQKTSTRDICTLNSELSSCKGVEYGYLKIPPRCMFEHPDAEKTLDHLISGFENFEKKINYPFKNKAYLLQAFTHASYHYNTITDCYQRLEFLGDAILDYLITKHLYEDPRQHSPGVLTDLRSALVNNTIFASLAVKYDYHKYFKAISPELFHVIDDFVQFQLEKNEMQGMDSELRRSEEDEEKEEDIEVPKAMGDIFESLAGAIYMDSGMSLETVWRVYYPMMHPLIEKFSANVPRSPVRELLEMEPETAKFSPAERTYDGKVRVTVEVVGKGKFKGVGRSYRIAKSAAARRALRSLKANQSQVPNS.

The Helicase ATP-binding domain occupies 41 to 217; sequence LLEAALDHNT…DLEEKIQKLE (177 aa). Residue 54-61 coordinates ATP; the sequence is LNSGSGKT. The DECH box motif lies at 165–168; the sequence is DECH. One can recognise a Helicase C-terminal domain in the interval 425–594; that stretch reads SFPSPFTNIL…SIDCGNTESE (170 aa). In terms of domain architecture, Dicer dsRNA-binding fold spans 622–714; sequence AIGHINRYCA…MPVGKETVKY (93 aa). The 148-residue stretch at 887–1034 folds into the PAZ domain; the sequence is KFVEDIEKSE…LVPELCAIHP (148 aa). 2 RNase III domains span residues 1248–1379 and 1635–1793; these read TSDM…ETSG and FENF…MDSG. 6 residues coordinate Mg(2+): Glu1292, Asp1370, Glu1373, Glu1674, Asp1779, and Glu1782. The DRBM domain occupies 1818–1883; the sequence is VPRSPVRELL…ARRALRSLKA (66 aa).

The protein belongs to the helicase family. Dicer subfamily. Component of the RISC loading complex (RLC), or micro-RNA (miRNA) loading complex (miRLC), which is composed of dicer1, ago2 and tarbp2; dicer1 and tarbp2 are required to process precursor miRNAs (pre-miRNAs) to mature miRNAs and then load them onto ago2. Note that the trimeric RLC/miRLC is also referred to as RISC. It depends on Mg(2+) as a cofactor. The cofactor is Mn(2+).

The protein resides in the cytoplasm. It catalyses the reaction Endonucleolytic cleavage to 5'-phosphomonoester.. Functionally, double-stranded RNA (dsRNA) endoribonuclease playing a central role in short dsRNA-mediated post-transcriptional gene silencing. Cleaves naturally occurring long dsRNAs and short hairpin pre-microRNAs (miRNA) into fragments of 21 to 23 nucleotides with 3' overhang of two nucleotides, producing respectively short interfering RNAs (siRNA) and mature microRNAs. SiRNAs and miRNAs serve as guide to direct the RNA-induced silencing complex (RISC) to complementary RNAs to degrade them or prevent their translation. Gene silencing mediated by siRNAs, also called RNA interference, controls the elimination of transcripts from mobile and repetitive DNA elements of the genome but also the degradation of exogenous RNA of viral origin for instance. The miRNA pathway on the other side is a mean to specifically regulate the expression of target genes. During embryonic development, at the left-right organizer, post-transcriptionally regulates the expression of dand5 in flow sensor cells. In post-flow stages, acts along with Bicc1 to repress dand5 mRNA translation and decay. Decreased Dand5 expression lifts repression of Nodal and defines leftness by induction of the lateral plate mesoderm Nodal signaling cascade. This Xenopus laevis (African clawed frog) protein is Endoribonuclease Dicer-L (dicer1.L).